Consider the following 344-residue polypeptide: Uroporphyrinogen decarboxylase (344 aa).

Substrate is bound by residues 23-27 (RQAGR), D73, Y149, T204, and H321.

This sequence belongs to the uroporphyrinogen decarboxylase family. In terms of assembly, homodimer.

It localises to the cytoplasm. The catalysed reaction is uroporphyrinogen III + 4 H(+) = coproporphyrinogen III + 4 CO2. The protein operates within porphyrin-containing compound metabolism; protoporphyrin-IX biosynthesis; coproporphyrinogen-III from 5-aminolevulinate: step 4/4. Functionally, catalyzes the decarboxylation of four acetate groups of uroporphyrinogen-III to yield coproporphyrinogen-III. In Francisella tularensis subsp. tularensis (strain FSC 198), this protein is Uroporphyrinogen decarboxylase.